Consider the following 299-residue polypeptide: Trans-aconitate 3-methyltransferase (299 aa).

Ser-2 carries the post-translational modification N-acetylserine.

This sequence belongs to the methyltransferase superfamily. Tam family.

The protein localises to the cytoplasm. It carries out the reaction trans-aconitate + S-adenosyl-L-methionine = (E)-2-(methoxycarbonylmethyl)but-2-enedioate + S-adenosyl-L-homocysteine. Catalyzes the S-adenosylmethionine monomethyl esterification of trans-aconitate and 3-isopropylmalate at high affinity and of other molecules like cis-aconitate, isocitrate, and citrate at lower velocities and affinities. The function of trans-aconitate methylation appears to be in reducing the toxicity of this spontaneous breakdown product of cis-aconitate. The role of 3-isopropylmalate methylation is unclear but may represent a metabolic branch at 3-isopropylmalate, where some of the material is taken in the pathway leading to leucine and some is taken in a pathway to the 3-isopropylmalate methyl ester, a molecule that provides a signal to switch from vegetative to invasive growth in response to amino acid starvation. The protein is Trans-aconitate 3-methyltransferase (TMT1) of Saccharomyces cerevisiae (strain YJM789) (Baker's yeast).